Consider the following 169-residue polypeptide: Regulator of sigma D (169 aa).

It belongs to the Rsd/AlgQ family. As to quaternary structure, interacts with RpoD.

It is found in the cytoplasm. In terms of biological role, binds RpoD and negatively regulates RpoD-mediated transcription activation by preventing the interaction between the primary sigma factor RpoD with the catalytic core of the RNA polymerase and with promoter DNA. May be involved in replacement of the RNA polymerase sigma subunit from RpoD to RpoS during the transition from exponential growth to the stationary phase. This chain is Regulator of sigma D, found in Yersinia pestis.